A 238-amino-acid chain; its full sequence is SH2 domain-containing adapter protein F (238 aa).

Disordered regions lie at residues 1 to 70 (MEPY…PWEW) and 85 to 121 (GSEN…EPSS). Ser39 carries the phosphoserine modification. Positions 55-66 (EDDERPPEEYDQ) are enriched in acidic residues. Tyr64 is subject to Phosphotyrosine. An SH2 domain is found at 138–233 (WYHGAISRTD…AEHMSLLYPV (96 aa)).

Interacts with phosphorylated 'Tyr-720' of PDGFRA via its SH2 domain. Post-translationally, may become phosphorylated upon binding to PDGFRA.

Functionally, adapter protein which may play a role in the regulation of apoptosis in response to PDGF. The sequence is that of SH2 domain-containing adapter protein F from Mus musculus (Mouse).